A 382-amino-acid polypeptide reads, in one-letter code: 2-heptyl-3-hydroxy-4(1H)-quinolone synthase (382 aa).

The protein belongs to the 3-hydroxybenzoate 6-hydroxylase family.

The catalysed reaction is 2-heptyl-4(1H)-quinolone + NADH + O2 + H(+) = 2-heptyl-3-hydroxy-4(1H)-quinolone + NAD(+) + H2O. Functionally, involved in the terminal step of the biosynthesis of quinolone which in addition to serve as a potent signal for quorum sensing, chelates iron and promotes the formation of membrane vesicles (MVs). Catalyzes the hydroxylation of 2-heptyl-4-quinolone (C7-HHQ) to yield 2-heptyl-3-hydroxy-4-quinolone (PQS). This chain is 2-heptyl-3-hydroxy-4(1H)-quinolone synthase (pqsH), found in Pseudomonas aeruginosa (strain ATCC 15692 / DSM 22644 / CIP 104116 / JCM 14847 / LMG 12228 / 1C / PRS 101 / PAO1).